The primary structure comprises 291 residues: 33 kDa chaperonin (291 aa).

Intrachain disulfides connect C237-C239 and C270-C273.

The protein belongs to the HSP33 family. Post-translationally, under oxidizing conditions two disulfide bonds are formed involving the reactive cysteines. Under reducing conditions zinc is bound to the reactive cysteines and the protein is inactive.

The protein resides in the cytoplasm. Redox regulated molecular chaperone. Protects both thermally unfolding and oxidatively damaged proteins from irreversible aggregation. Plays an important role in the bacterial defense system toward oxidative stress. This Bacillus cereus (strain G9842) protein is 33 kDa chaperonin.